Reading from the N-terminus, the 358-residue chain is 3-dehydroquinate synthase (358 aa).

NAD(+) contacts are provided by residues 70–75 (DGEKFK), 104–108 (GVVGD), 128–129 (TT), K141, K150, and 168–171 (CLQT). Zn(2+)-binding residues include E183, H246, and H263.

It belongs to the sugar phosphate cyclases superfamily. Dehydroquinate synthase family. Requires Co(2+) as cofactor. It depends on Zn(2+) as a cofactor. The cofactor is NAD(+).

The protein resides in the cytoplasm. The enzyme catalyses 7-phospho-2-dehydro-3-deoxy-D-arabino-heptonate = 3-dehydroquinate + phosphate. It functions in the pathway metabolic intermediate biosynthesis; chorismate biosynthesis; chorismate from D-erythrose 4-phosphate and phosphoenolpyruvate: step 2/7. Functionally, catalyzes the conversion of 3-deoxy-D-arabino-heptulosonate 7-phosphate (DAHP) to dehydroquinate (DHQ). In Shewanella frigidimarina (strain NCIMB 400), this protein is 3-dehydroquinate synthase.